A 441-amino-acid chain; its full sequence is Anti-sigma-I factor RsgI (441 aa).

Topologically, residues 1-53 (MMNKGIVMDIKKHSVVVLTPNGEFITCKRKGDSCMIGEEISFDEQEQKASRFS) are cytoplasmic. One can recognise a RsgI N-terminal anti-sigma domain in the interval 3–51 (NKGIVMDIKKHSVVVLTPNGEFITCKRKGDSCMIGEEISFDEQEQKASR). A helical membrane pass occupies residues 54–76 (IPYFLKPASLLVACFLCALLFFY). Residues 77-441 (NQPEEKVFAY…HQQGNEKKNQ (365 aa)) lie on the Extracellular side of the membrane. A disordered region spans residues 213-441 (ENEKNKSVTP…HQQGNEKKNQ (229 aa)). Residues 219-230 (SVTPPATPSNPV) show a composition bias toward polar residues. Low complexity predominate over residues 240 to 251 (PDSSPDVVPDLS). Residues 252–281 (SVKDKKYEKPEYKEQKKIEEQPTKQIKENN) show a composition bias toward basic and acidic residues. Low complexity-rich tracts occupy residues 282–328 (GRGS…QQGN), 336–358 (NNGH…QQGN), and 366–408 (NNGH…NGRG). Residues 411–428 (KENVGNEQGNNGRGSQQE) show a composition bias toward polar residues. Positions 429–441 (NRGHQQGNEKKNQ) are enriched in basic and acidic residues.

Interacts (via RsgI N-terminal anti-sigma domain) with SigI.

Its subcellular location is the cell membrane. Functionally, anti-sigma factor for SigI. Negatively regulates SigI activity through direct interaction. Has no direct effect on virulence gene expression. In Bacillus anthracis, this protein is Anti-sigma-I factor RsgI.